The following is a 469-amino-acid chain: UDP-N-acetylmuramate--L-alanine ligase (469 aa).

Residue 114 to 120 coordinates ATP; sequence GTHGKTT.

This sequence belongs to the MurCDEF family.

The protein localises to the cytoplasm. The catalysed reaction is UDP-N-acetyl-alpha-D-muramate + L-alanine + ATP = UDP-N-acetyl-alpha-D-muramoyl-L-alanine + ADP + phosphate + H(+). Its pathway is cell wall biogenesis; peptidoglycan biosynthesis. Functionally, cell wall formation. The sequence is that of UDP-N-acetylmuramate--L-alanine ligase from Chlorobium phaeovibrioides (strain DSM 265 / 1930) (Prosthecochloris vibrioformis (strain DSM 265)).